Consider the following 501-residue polypeptide: V-type proton ATPase subunit B 2 (501 aa).

ATP is bound at residue Arg-392.

This sequence belongs to the ATPase alpha/beta chains family. V-ATPase is a heteromultimeric enzyme made up of two complexes: the ATP-hydrolytic V1 complex and the proton translocation V0 complex. The V1 complex consists of three catalytic AB heterodimers that form a heterohexamer, three peripheral stalks each consisting of EG heterodimers, one central rotor including subunits D and F, and the regulatory subunits C and H. The proton translocation complex V0 consists of the proton transport subunit a, a ring of proteolipid subunits c9c'', rotary subunit d, subunits e and f, and the accessory subunits vah-19/Ac45 and vah-20/PRR. Predominantly expressed in male and hermaphrodite testis (at protein level).

It localises to the cytoplasm. Its function is as follows. Non-catalytic subunit of the V1 complex of vacuolar(H+)-ATPase (V-ATPase), a multisubunit enzyme composed of a peripheral complex (V1) that hydrolyzes ATP and a membrane integral complex (V0) that translocates protons. V-ATPase is responsible for acidifying and maintaining the pH of intracellular compartments and in some cell types, is targeted to the plasma membrane, where it is responsible for acidifying the extracellular environment. In neurons, required for necrotic cell death probably by promoting intracellular acidification. Required for spermatogenesis where it regulates the fibrous body-membranous organelle (FBMO) morphology in spermatocytes and the acidification of FBMO-derived secretory membranous organelles (MOs) as spermatids mature. This is V-type proton ATPase subunit B 2 from Caenorhabditis elegans.